A 241-amino-acid polypeptide reads, in one-letter code: Glutathione S-transferase omega-1 (241 aa).

N-acetylserine is present on serine 2. The GST N-terminal domain occupies 22–101 (GQIRVYSMRF…YLDEAYPEKK (80 aa)). The active-site Nucleophile is the cysteine 32. At lysine 57 the chain carries N6-acetyllysine. Residues lysine 59, valine 72, and 85-86 (ES) each bind glutathione. The GST C-terminal domain occupies 106–228 (DPYEKACQKM…AKTYRDYLSL (123 aa)). The residue at position 129 (serine 129) is a Phosphoserine. Lysine 143, lysine 148, and lysine 152 each carry N6-acetyllysine.

The protein belongs to the GST superfamily. Omega family. In terms of assembly, homodimer.

Its subcellular location is the cytoplasm. The protein resides in the cytosol. The catalysed reaction is RX + glutathione = an S-substituted glutathione + a halide anion + H(+). The enzyme catalyses L-dehydroascorbate + 2 glutathione = glutathione disulfide + L-ascorbate. It carries out the reaction methylarsonate + 2 glutathione + H(+) = methylarsonous acid + glutathione disulfide + H2O. Its function is as follows. Exhibits glutathione-dependent thiol transferase and dehydroascorbate reductase activities. Has S-(phenacyl)glutathione reductase activity. Also has glutathione S-transferase activity. Participates in the biotransformation of inorganic arsenic and reduces monomethylarsonic acid (MMA) and dimethylarsonic acid. The chain is Glutathione S-transferase omega-1 (Gsto1) from Rattus norvegicus (Rat).